Consider the following 237-residue polypeptide: Demethylmenaquinone methyltransferase (237 aa).

Residues threonine 58, aspartate 79, and 106–107 contribute to the S-adenosyl-L-methionine site; that span reads NA.

This sequence belongs to the class I-like SAM-binding methyltransferase superfamily. MenG/UbiE family.

It carries out the reaction a 2-demethylmenaquinol + S-adenosyl-L-methionine = a menaquinol + S-adenosyl-L-homocysteine + H(+). It functions in the pathway quinol/quinone metabolism; menaquinone biosynthesis; menaquinol from 1,4-dihydroxy-2-naphthoate: step 2/2. Its function is as follows. Methyltransferase required for the conversion of demethylmenaquinol (DMKH2) to menaquinol (MKH2). The sequence is that of Demethylmenaquinone methyltransferase from Bacillus cereus (strain ATCC 10987 / NRS 248).